The following is a 427-amino-acid chain: Enolase (427 aa).

Glutamine 162 provides a ligand contact to (2R)-2-phosphoglycerate. Glutamate 204 serves as the catalytic Proton donor. 3 residues coordinate Mg(2+): aspartate 241, glutamate 284, and aspartate 311. (2R)-2-phosphoglycerate contacts are provided by lysine 336, arginine 365, serine 366, and lysine 387. Lysine 336 (proton acceptor) is an active-site residue.

It belongs to the enolase family. Mg(2+) is required as a cofactor.

It localises to the cytoplasm. Its subcellular location is the secreted. The protein localises to the cell surface. The catalysed reaction is (2R)-2-phosphoglycerate = phosphoenolpyruvate + H2O. The protein operates within carbohydrate degradation; glycolysis; pyruvate from D-glyceraldehyde 3-phosphate: step 4/5. Its function is as follows. Catalyzes the reversible conversion of 2-phosphoglycerate (2-PG) into phosphoenolpyruvate (PEP). It is essential for the degradation of carbohydrates via glycolysis. In Corynebacterium kroppenstedtii (strain DSM 44385 / JCM 11950 / CIP 105744 / CCUG 35717), this protein is Enolase.